Reading from the N-terminus, the 294-residue chain is Nucleotide-binding protein CLL_A3342 (294 aa).

8-15 (GLSGAGKT) contacts ATP. 59–62 (DIRG) contacts GTP.

It belongs to the RapZ-like family.

Its function is as follows. Displays ATPase and GTPase activities. The sequence is that of Nucleotide-binding protein CLL_A3342 from Clostridium botulinum (strain Eklund 17B / Type B).